The chain runs to 571 residues: Oxysterol-binding protein 11 (571 aa).

The disordered stretch occupies residues 1–73; it reads MSNFFKKLVK…IGEQIDTLDD (73 aa). A compositionally biased stretch (polar residues) spans 33 to 42; that stretch reads NGNQVVPDTA. Low complexity predominate over residues 43-54; it reads SSYSDDSNSLSD. Positions 387-420 form a coiled coil; that stretch reads YLEREENKLANKEKNKIEEREREKRKTRESRKEI.

Belongs to the OSBP family.

In Dictyostelium discoideum (Social amoeba), this protein is Oxysterol-binding protein 11 (osbK).